A 604-amino-acid chain; its full sequence is Uptake hydrogenase large subunit (604 aa).

Residues C76, C79, C583, and C586 each coordinate Ni(2+).

Belongs to the [NiFe]/[NiFeSe] hydrogenase large subunit family. In terms of assembly, heterodimer of a large and a small subunit. Requires Ni(2+) as cofactor.

The protein localises to the cell membrane. It catalyses the reaction H2 + A = AH2. Its function is as follows. This enzyme recycles the H(2) produced by nitrogenase to increase the production of ATP and to protect nitrogenase against inhibition or damage by O(2) under carbon- or phosphate-limited conditions. The polypeptide is Uptake hydrogenase large subunit (hoxL) (Afipia carboxidovorans (strain ATCC 49405 / DSM 1227 / KCTC 32145 / OM5) (Oligotropha carboxidovorans)).